The chain runs to 259 residues: tRNA (guanine-N(7)-)-methyltransferase (259 aa).

A disordered region spans residues 1–36 (MTFPSHNPPETGHPSAAPDEALPAAEAPVPGDPEAR). Residues 14-29 (PSAAPDEALPAAEAPV) show a composition bias toward low complexity. S-adenosyl-L-methionine contacts are provided by E91, E116, D143, and D166. D166 is an active-site residue. Substrate-binding positions include K170, D202, and 237–240 (TKFE).

It belongs to the class I-like SAM-binding methyltransferase superfamily. TrmB family.

It catalyses the reaction guanosine(46) in tRNA + S-adenosyl-L-methionine = N(7)-methylguanosine(46) in tRNA + S-adenosyl-L-homocysteine. It functions in the pathway tRNA modification; N(7)-methylguanine-tRNA biosynthesis. Functionally, catalyzes the formation of N(7)-methylguanine at position 46 (m7G46) in tRNA. This is tRNA (guanine-N(7)-)-methyltransferase from Aromatoleum aromaticum (strain DSM 19018 / LMG 30748 / EbN1) (Azoarcus sp. (strain EbN1)).